The sequence spans 501 residues: MLLQMAGRGKMVPCVCLGLLGVLCWVWVSFASFPDEQLSLGAMDAVERAAFQPQSALSEMEFASIGSYRGPGNLDHRSNKELPILLWWSAGLFPHFPGDTERIDCARSSCLATSNRKVQLYKRTASIIFYGTDFRAYEAPLPRLRHQTWALFHEESPMNNYLLSHGPGIRLFNYTATFRRESDYPLTLQWLPSLEYLLTPVPVPLEEKNRLRREGLAPVLYMQSHCDVPSDRDRYVQELMKYIQVDSYGKCLNNKPLAGNLEDTSTATGEEQTFMSFVARYKFHLALENGLCPDYMTEKLWRPLHQGCVPVYRGSSVVADWMPNERSAIIIDEFPSPQALAEYLLHLDENDDEYRKYLEFKSPKRITNARLLEALERREWGVNDMSKPNYLNGFECYVCDQENARLAAERAHRKAPKTNKPPEWKMANNSHMGCPLPSPGYGQVHHLPADDGWLQTWPQDYWQSLDQAEGLESLIRHNESDPSLLWKHIQNMAVRRARGKN.

At 1–10 the chain is on the cytoplasmic side; that stretch reads MLLQMAGRGK. A helical; Signal-anchor for type II membrane protein membrane pass occupies residues 11–31; sequence MVPCVCLGLLGVLCWVWVSFA. Residues 32–501 are Lumenal-facing; it reads SFPDEQLSLG…MAVRRARGKN (470 aa). Residue asparagine 173 is glycosylated (N-linked (GlcNAc...) asparagine). An intrachain disulfide couples cysteine 396 to cysteine 399. N-linked (GlcNAc...) asparagine glycans are attached at residues asparagine 428 and asparagine 478.

Belongs to the glycosyltransferase 10 family.

It localises to the endoplasmic reticulum membrane. It catalyses the reaction L-threonyl-[protein] + GDP-beta-L-fucose = 3-O-(alpha-L-fucosyl)-L-threonyl-[protein] + GDP + H(+). The enzyme catalyses L-seryl-[protein] + GDP-beta-L-fucose = 3-O-(alpha-L-fucosyl)-L-seryl-[protein] + GDP + H(+). Its pathway is protein modification; protein glycosylation. Functionally, protein O-fucosyltransferase that specifically catalyzes O-fucosylation of serine or threonine residues in EMI domains of target proteins. Attaches fucose through an O-glycosidic linkage. O-fucosylation of EMI domain-containing proteins may be required for facilitating protein folding and secretion. The sequence is that of GDP-fucose protein O-fucosyltransferase 4 (fut11) from Takifugu rubripes (Japanese pufferfish).